The primary structure comprises 875 residues: Probable ATP-dependent RNA helicase DDX10 (875 aa).

The interval 1 to 44 is disordered; it reads MGKTVASLGQGTRPDPVRSFNRWKKKHSHRQHQKKERRKQLKKP. The residue at position 4 (threonine 4) is a Phosphothreonine. At serine 7 the chain carries Phosphoserine. Residues 21–41 show a composition bias toward basic residues; it reads NRWKKKHSHRQHQKKERRKQL. The Q motif motif lies at 69–97; the sequence is TRFSDFPLSKKTLKGLQEAQYRLVTEIQK. Residues 89–91, glutamine 96, and 113–120 contribute to the ATP site; these read YRL and AKTGSGKT. The 175-residue stretch at 100-274 folds into the Helicase ATP-binding domain; sequence IGLALQGKDV…RLSLKDPEYV (175 aa). The DEAD box motif lies at 222 to 225; it reads DEAD. The 150-residue stretch at 300–449 folds into the Helicase C-terminal domain; the sequence is KISVLFSFLR…EIKINPEKLI (150 aa). The disordered stretch occupies residues 525–612; it reads LVKNPVTEAV…HTESVVSIEE (88 aa). Serine 540 is subject to Phosphoserine. Lysine 556 carries the post-translational modification N6-acetyllysine. Basic and acidic residues predominate over residues 562–575; sequence KSGERLEETEHRLA. Over residues 578–593 the composition is skewed to acidic residues; that stretch reads DGDEEQDEETEDEETE. A Phosphothreonine modification is found at threonine 587. The span at 594–604 shows a compositional bias: basic and acidic residues; sequence DHLGKAREPHT. A Glycyl lysine isopeptide (Lys-Gly) (interchain with G-Cter in SUMO2) cross-link involves residue lysine 652. Residues 734-744 show a composition bias toward basic and acidic residues; it reads EEDKFDKEEYR. A disordered region spans residues 734–860; that stretch reads EEDKFDKEEY…VEPLDTGLSL (127 aa). Residues 745–754 show a composition bias toward basic residues; that stretch reads KKIKAKHRER. A compositionally biased stretch (basic and acidic residues) spans 755-774; it reads RLKEREARREANKRQAKARD. A compositionally biased stretch (acidic residues) spans 775-789; sequence EEEAFLDWSDEDDGG. The residue at position 783 (serine 783) is a Phosphoserine. The segment covering 797 to 831 has biased composition (basic and acidic residues); sequence DPDKHRSSEESESEDTNHKMSDTKKKQETRKRNNT.

It belongs to the DEAD box helicase family. DDX10/DBP4 subfamily. Interacts with AIM2; this interaction promotes AIM2 stability. Interacts with SCNA; this interaction causes DDX10 mislocalization to the nucleoplasm and cytoplasmic inclusions.

It localises to the cytoplasm. It is found in the nucleus. Its subcellular location is the nucleolus. It catalyses the reaction ATP + H2O = ADP + phosphate + H(+). In terms of biological role, putative ATP-dependent RNA helicase that plays various role in innate immunity or inflammation. Plays a role in the enhancement of AIM2-induced inflammasome activation by interacting with AIM2 and stabilizing its protein level. Negatively regulates viral infection by promoting interferon beta production and interferon stimulated genes/ISGs expression. The protein is Probable ATP-dependent RNA helicase DDX10 (Ddx10) of Mus musculus (Mouse).